Consider the following 601-residue polypeptide: DNA ligase (601 aa).

Asp-258 is a binding site for ATP. Lys-260 acts as the N6-AMP-lysine intermediate in catalysis. Residues Arg-265, Arg-280, Glu-310, Phe-350, Arg-427, and Lys-433 each contribute to the ATP site.

Belongs to the ATP-dependent DNA ligase family. Interacts with the PCNA heterotrimer, probably via subunit PCNA3. Requires a divalent metal cation as cofactor.

It carries out the reaction ATP + (deoxyribonucleotide)n-3'-hydroxyl + 5'-phospho-(deoxyribonucleotide)m = (deoxyribonucleotide)n+m + AMP + diphosphate.. Ligase activity stimulated by PCNA heterotrimer. Its function is as follows. DNA ligase that seals nicks in double-stranded DNA during DNA replication, DNA recombination and DNA repair. Interaction with PCNA enhances ligase activity. DNA polymerase I, DNA ligase and the flap endonuclease may be constitutively associated with the PCNA heterotrimer forming a scanning complex able to couple DNA synthesis and Okazaki fragment maturation. This is DNA ligase from Saccharolobus solfataricus (strain ATCC 35092 / DSM 1617 / JCM 11322 / P2) (Sulfolobus solfataricus).